The primary structure comprises 496 residues: Lysine--tRNA ligase (496 aa).

The Mg(2+) site is built by glutamate 409 and glutamate 416.

The protein belongs to the class-II aminoacyl-tRNA synthetase family. In terms of assembly, homodimer. It depends on Mg(2+) as a cofactor.

It localises to the cytoplasm. It catalyses the reaction tRNA(Lys) + L-lysine + ATP = L-lysyl-tRNA(Lys) + AMP + diphosphate. This Streptococcus suis (strain 05ZYH33) protein is Lysine--tRNA ligase.